The chain runs to 488 residues: E3 ubiquitin-protein ligase TRIM39 (488 aa).

An RING-type zinc finger spans residues cysteine 29 to arginine 70. The B box-type zinc-finger motif lies at arginine 102 to methionine 143. Zn(2+) contacts are provided by cysteine 107, histidine 110, cysteine 129, and histidine 135. Positions glutamate 181–lysine 250 form a coiled coil. 2 interaction with CDKN1A regions span residues lysine 268–alanine 307 and threonine 359–glutamate 488. A B30.2/SPRY domain is found at serine 289–proline 484.

This sequence belongs to the TRIM/RBCC family. In terms of assembly, interacts with MOAP1. Interacts with CDKN1A. Post-translationally, autoubiquitinated.

The protein localises to the cytoplasm. It localises to the cytosol. It is found in the mitochondrion. Its subcellular location is the nucleus. It carries out the reaction S-ubiquitinyl-[E2 ubiquitin-conjugating enzyme]-L-cysteine + [acceptor protein]-L-lysine = [E2 ubiquitin-conjugating enzyme]-L-cysteine + N(6)-ubiquitinyl-[acceptor protein]-L-lysine.. It participates in protein modification; protein ubiquitination. In terms of biological role, E3 ubiquitin-protein ligase. May facilitate apoptosis by inhibiting APC/C-Cdh1-mediated poly-ubiquitination and subsequent proteasome-mediated degradation of the pro-apoptotic protein MOAP1. Regulates the G1/S transition of the cell cycle and DNA damage-induced G2 arrest by stabilizing CDKN1A/p21. Positively regulates CDKN1A/p21 stability by competing with DTL for CDKN1A/p21 binding, therefore disrupting DCX(DTL) E3 ubiquitin ligase complex-mediated CDKN1A/p21 ubiquitination and degradation. The polypeptide is E3 ubiquitin-protein ligase TRIM39 (Trim39) (Rattus norvegicus (Rat)).